Here is a 417-residue protein sequence, read N- to C-terminus: MQDIGKCARSASRAMARASSEQKNQALLHIAKVVRQKSEEIQQVNQVDVERAKVNGQDAAFIDRLTMTPKTIETMALGLEQIVLLDDPIGKIGTLKKQASGIELGQMRVPLGVIGIIYESRPNVTIDAAALCLKSGNAVILRGGSEAIDSNTLLAQIIQEGLAAAGLPKDAVQVVTITDRAAVGEMITMTQYIDVIVPRGGKSLIARLMAEARVPMIKHLDGICHTYIDADADIAMAIKVCDNAKTQRYAPCNAMETLLVNRDIAPKVLPSLCKVYQDKGVELRVDALTRQTLEQNGFQNLVDATEADWQTEYLAPILSIKTVADIDEAMNHIEHYGSKHTDAIITNNKAQADRFLREVDSASVMVNASTRFADGFEYGLGAEIGISNDKLHARGPVGLDGLTSLKYVVLGHGEIRT.

The protein belongs to the gamma-glutamyl phosphate reductase family.

The protein resides in the cytoplasm. The catalysed reaction is L-glutamate 5-semialdehyde + phosphate + NADP(+) = L-glutamyl 5-phosphate + NADPH + H(+). It participates in amino-acid biosynthesis; L-proline biosynthesis; L-glutamate 5-semialdehyde from L-glutamate: step 2/2. In terms of biological role, catalyzes the NADPH-dependent reduction of L-glutamate 5-phosphate into L-glutamate 5-semialdehyde and phosphate. The product spontaneously undergoes cyclization to form 1-pyrroline-5-carboxylate. In Polynucleobacter asymbioticus (strain DSM 18221 / CIP 109841 / QLW-P1DMWA-1) (Polynucleobacter necessarius subsp. asymbioticus), this protein is Gamma-glutamyl phosphate reductase.